The chain runs to 446 residues: MKEIEKLKEEYPLLNKLIATEEVFWVNPNMEKYETAIKDSPLSEENVKDAEERLKRFASYIAKVFPETKETKGIIESPLLKIPSMKQALEKNYEQPILGELLLKCDSHLPISGSIKARGGIYEVLKHAEQLALQHGMLTEEDNYAILDSDTCREFFATYSIAVGSTGNLGLSIGIMSAKLGFNVTVHMSADAKQWKKDLLRSKGVNVIEYEADYSKAVEEGRRQADADPSCYFVDDENSHDLFLGYAVAASRLQKQLEELKIVVDEEHPLFVYLPCGVGGGPGGVAFGLKLLYKDNVHCFFAEPTHSPCMLIGLMTGLHDKIAVQDIGIDNVTDADGLAVGRPSGFVGKTMEPFLSGNYTVSDEELYRLLKELADTENIYLEPSALAGMIGPVKVCKEDAYLQKQQLMEKVQKGTHIVWGTGGSMVPEDVMNGYYKTGEALTILEK.

Position 116 is an N6-(pyridoxal phosphate)lysine (Lys-116).

The protein belongs to the serine/threonine dehydratase family. DsdA subfamily. Requires pyridoxal 5'-phosphate as cofactor.

It carries out the reaction D-serine = pyruvate + NH4(+). The chain is Probable D-serine dehydratase from Bacillus thuringiensis subsp. konkukian (strain 97-27).